Consider the following 154-residue polypeptide: ATP synthase subunit b (154 aa).

A helical membrane pass occupies residues 9–29 (AIAFVIFVWFCMKYVWPPLMA).

Belongs to the ATPase B chain family. As to quaternary structure, F-type ATPases have 2 components, F(1) - the catalytic core - and F(0) - the membrane proton channel. F(1) has five subunits: alpha(3), beta(3), gamma(1), delta(1), epsilon(1). F(0) has three main subunits: a(1), b(2) and c(10-14). The alpha and beta chains form an alternating ring which encloses part of the gamma chain. F(1) is attached to F(0) by a central stalk formed by the gamma and epsilon chains, while a peripheral stalk is formed by the delta and b chains.

The protein resides in the cell inner membrane. F(1)F(0) ATP synthase produces ATP from ADP in the presence of a proton or sodium gradient. F-type ATPases consist of two structural domains, F(1) containing the extramembraneous catalytic core and F(0) containing the membrane proton channel, linked together by a central stalk and a peripheral stalk. During catalysis, ATP synthesis in the catalytic domain of F(1) is coupled via a rotary mechanism of the central stalk subunits to proton translocation. Its function is as follows. Component of the F(0) channel, it forms part of the peripheral stalk, linking F(1) to F(0). The chain is ATP synthase subunit b from Klebsiella pneumoniae subsp. pneumoniae (strain ATCC 700721 / MGH 78578).